The following is a 126-amino-acid chain: Ribonuclease P protein component (126 aa).

This sequence belongs to the RnpA family. Consists of a catalytic RNA component (M1 or rnpB) and a protein subunit.

It carries out the reaction Endonucleolytic cleavage of RNA, removing 5'-extranucleotides from tRNA precursor.. Functionally, RNaseP catalyzes the removal of the 5'-leader sequence from pre-tRNA to produce the mature 5'-terminus. It can also cleave other RNA substrates such as 4.5S RNA. The protein component plays an auxiliary but essential role in vivo by binding to the 5'-leader sequence and broadening the substrate specificity of the ribozyme. The polypeptide is Ribonuclease P protein component (Rhodococcus erythropolis (strain PR4 / NBRC 100887)).